We begin with the raw amino-acid sequence, 926 residues long: Probable zinc protease PqqL (926 aa).

His79 serves as a coordination point for Zn(2+). The Proton acceptor role is filled by Glu82. Positions 83 and 159 each coordinate Zn(2+).

The protein belongs to the peptidase M16 family. Zn(2+) is required as a cofactor.

This Haemophilus influenzae (strain ATCC 51907 / DSM 11121 / KW20 / Rd) protein is Probable zinc protease PqqL (pqqL).